Reading from the N-terminus, the 160-residue chain is Cyclic pyranopterin monophosphate synthase (160 aa).

Substrate contacts are provided by residues 75–77 (LCH) and 113–114 (ME). D128 is a catalytic residue.

This sequence belongs to the MoaC family. In terms of assembly, homohexamer; trimer of dimers.

The enzyme catalyses (8S)-3',8-cyclo-7,8-dihydroguanosine 5'-triphosphate = cyclic pyranopterin phosphate + diphosphate. It participates in cofactor biosynthesis; molybdopterin biosynthesis. Its function is as follows. Catalyzes the conversion of (8S)-3',8-cyclo-7,8-dihydroguanosine 5'-triphosphate to cyclic pyranopterin monophosphate (cPMP). The protein is Cyclic pyranopterin monophosphate synthase of Haemophilus influenzae (strain PittEE).